Reading from the N-terminus, the 494-residue chain is UDP-N-acetylmuramoyl-L-alanyl-D-glutamate--L-lysine ligase (494 aa).

Serine 30 contributes to the UDP-N-acetyl-alpha-D-muramoyl-L-alanyl-D-glutamate binding site. Residue 110-116 participates in ATP binding; it reads GTNGKTS. Residues 152–153, serine 179, and arginine 187 contribute to the UDP-N-acetyl-alpha-D-muramoyl-L-alanyl-D-glutamate site; that span reads TT. N6-carboxylysine is present on lysine 219. The L-lysine recognition motif motif lies at 406–409; it reads DNPA.

The protein belongs to the MurCDEF family. MurE subfamily. Post-translationally, carboxylation is probably crucial for Mg(2+) binding and, consequently, for the gamma-phosphate positioning of ATP.

Its subcellular location is the cytoplasm. It carries out the reaction UDP-N-acetyl-alpha-D-muramoyl-L-alanyl-D-glutamate + L-lysine + ATP = UDP-N-acetyl-alpha-D-muramoyl-L-alanyl-gamma-D-glutamyl-L-lysine + ADP + phosphate + H(+). Its pathway is cell wall biogenesis; peptidoglycan biosynthesis. Catalyzes the addition of L-lysine to the nucleotide precursor UDP-N-acetylmuramoyl-L-alanyl-D-glutamate (UMAG) in the biosynthesis of bacterial cell-wall peptidoglycan. The protein is UDP-N-acetylmuramoyl-L-alanyl-D-glutamate--L-lysine ligase of Staphylococcus aureus (strain bovine RF122 / ET3-1).